The sequence spans 549 residues: Cation/acetate symporter ActP (549 aa).

13 consecutive transmembrane segments (helical) span residues 33–53 (WQAIIMFLIFVVFTLGITYWA), 77–97 (LAIAGDYMSAASFLGISALVF), 103–123 (GLIYSLGFLVGWPIILFLIAE), 148–168 (ILSACGSLVVVALYLIAQMVG), 183–203 (IAVVLVGVLMMMYVLFGGMLA), 206–226 (WVQIIKAVLLLFGASFMAFMV), 262–282 (ISALSLGLGLMFGTAGLPHIL), 303–323 (GFMGYFYILTFIIGFGAIMLV), 355–375 (LFLGFISAVAFATILAVVAGL), 404–424 (VSKITVLILGVIAIILGVLFE), 428–448 (IAFMVGLAFAIAASCNFPIIL), 464–484 (GGWLGLITAVVLMILGPTIWV), and 493–513 (IFPYEYPALFSITVAFLGIWF).

Belongs to the sodium:solute symporter (SSF) (TC 2.A.21) family.

The protein resides in the cell inner membrane. Functionally, transports acetate. The polypeptide is Cation/acetate symporter ActP (Escherichia fergusonii (strain ATCC 35469 / DSM 13698 / CCUG 18766 / IAM 14443 / JCM 21226 / LMG 7866 / NBRC 102419 / NCTC 12128 / CDC 0568-73)).